The chain runs to 256 residues: uncharacterized protein (256 aa).

9–33 (VTGGGQGIGAAIAQLFAENGMKVVI) lines the NADP(+) pocket. S140 is a binding site for substrate. Y153 acts as the Proton acceptor in catalysis.

This sequence belongs to the short-chain dehydrogenases/reductases (SDR) family.

This is an uncharacterized protein from Thermotoga maritima (strain ATCC 43589 / DSM 3109 / JCM 10099 / NBRC 100826 / MSB8).